Reading from the N-terminus, the 388-residue chain is Formate-dependent phosphoribosylglycinamide formyltransferase (388 aa).

Residues 15–16 (EL) and Glu75 each bind N(1)-(5-phospho-beta-D-ribosyl)glycinamide. ATP is bound by residues Arg107, Lys148, 153 to 158 (SSGKGQ), 188 to 191 (EEFL), and Glu196. The region spanning 112–302 (DLAAGELALR…EFELHLRAVL (191 aa)) is the ATP-grasp domain. 2 residues coordinate Mg(2+): Glu261 and Glu273. N(1)-(5-phospho-beta-D-ribosyl)glycinamide is bound by residues Asp280, Lys350, and 357–358 (RR).

It belongs to the PurK/PurT family. In terms of assembly, homodimer.

It carries out the reaction N(1)-(5-phospho-beta-D-ribosyl)glycinamide + formate + ATP = N(2)-formyl-N(1)-(5-phospho-beta-D-ribosyl)glycinamide + ADP + phosphate + H(+). Its pathway is purine metabolism; IMP biosynthesis via de novo pathway; N(2)-formyl-N(1)-(5-phospho-D-ribosyl)glycinamide from N(1)-(5-phospho-D-ribosyl)glycinamide (formate route): step 1/1. In terms of biological role, involved in the de novo purine biosynthesis. Catalyzes the transfer of formate to 5-phospho-ribosyl-glycinamide (GAR), producing 5-phospho-ribosyl-N-formylglycinamide (FGAR). Formate is provided by PurU via hydrolysis of 10-formyl-tetrahydrofolate. This is Formate-dependent phosphoribosylglycinamide formyltransferase from Parasynechococcus marenigrum (strain WH8102).